The following is a 99-amino-acid chain: DNA-binding protein Fis (99 aa).

A DNA-binding region (H-T-H motif) is located at residues Q75–K94.

It belongs to the transcriptional regulatory Fis family. In terms of assembly, homodimer.

Its function is as follows. Activates ribosomal RNA transcription. Plays a direct role in upstream activation of rRNA promoters. In Actinobacillus succinogenes (strain ATCC 55618 / DSM 22257 / CCUG 43843 / 130Z), this protein is DNA-binding protein Fis.